The following is a 338-amino-acid chain: Glycerol-3-phosphate dehydrogenase [NAD(P)+] (338 aa).

3 residues coordinate NADPH: Ser-13, Trp-14, and Lys-108. Lys-108, Gly-139, and Ser-141 together coordinate sn-glycerol 3-phosphate. NADPH is bound at residue Ala-143. Sn-glycerol 3-phosphate contacts are provided by Lys-194, Asp-247, Ser-257, Arg-258, and Asn-259. Catalysis depends on Lys-194, which acts as the Proton acceptor. Arg-258 contributes to the NADPH binding site. 2 residues coordinate NADPH: Val-282 and Glu-284.

Belongs to the NAD-dependent glycerol-3-phosphate dehydrogenase family.

The protein localises to the cytoplasm. The catalysed reaction is sn-glycerol 3-phosphate + NAD(+) = dihydroxyacetone phosphate + NADH + H(+). It carries out the reaction sn-glycerol 3-phosphate + NADP(+) = dihydroxyacetone phosphate + NADPH + H(+). Its pathway is membrane lipid metabolism; glycerophospholipid metabolism. Its function is as follows. Catalyzes the reduction of the glycolytic intermediate dihydroxyacetone phosphate (DHAP) to sn-glycerol 3-phosphate (G3P), the key precursor for phospholipid synthesis. This chain is Glycerol-3-phosphate dehydrogenase [NAD(P)+], found in Streptococcus pneumoniae (strain Hungary19A-6).